Consider the following 193-residue polypeptide: Interferon lambda-3 (193 aa).

The first 19 residues, Met1–Ala19, serve as a signal peptide directing secretion. Intrachain disulfides connect Cys35–Cys132, Cys69–Cys166, and Cys185–Cys192.

Belongs to the lambda interferon family.

The protein localises to the secreted. Its function is as follows. Cytokine with antiviral, antitumour and immunomodulatory activities. Plays a critical role in the antiviral host defense, predominantly in the epithelial tissues. Acts as a ligand for the heterodimeric class II cytokine receptor composed of IL10RB and IFNLR1, and receptor engagement leads to the activation of the JAK/STAT signaling pathway resulting in the expression of IFN-stimulated genes (ISG), which mediate the antiviral state. Has a restricted receptor distribution and therefore restricted targets: is primarily active in epithelial cells and this cell type-selective action is because of the epithelial cell-specific expression of its receptor IFNLR1. Seems not to be essential for early virus-activated host defense in vaginal infection, but plays an important role in Toll-like receptor (TLR)-induced antiviral defense. Plays a significant role in the antiviral immune defense in the intestinal epithelium. Exerts an immunomodulatory effect by up-regulating MHC class I antigen expression. The protein is Interferon lambda-3 (Ifnl3) of Mus musculus (Mouse).